Reading from the N-terminus, the 395-residue chain is Flap endonuclease 1 (395 aa).

The segment at 1–104 (MGIKHLYQLI…GELAKRFQRK (104 aa)) is N-domain. Asp34 contributes to the Mg(2+) binding site. Residues Arg47 and Arg70 each contribute to the DNA site. Mg(2+)-binding residues include Asp86, Glu158, Glu160, Asp179, and Asp181. The I-domain stretch occupies residues 122–253 (DVEKFSRRTV…STALKLIREH (132 aa)). Glu158 serves as a coordination point for DNA. Positions 231 and 233 each coordinate DNA. Asp233 serves as a coordination point for Mg(2+). Residues 341-349 (QQSRLEGFF) form an interaction with PCNA region. Positions 359–395 (KATLKRKADEKLEEKKKKQKVDAKAKKQAKAKPRTAG) are disordered. Positions 364 to 383 (RKADEKLEEKKKKQKVDAKA) are enriched in basic and acidic residues. Over residues 384–395 (KKQAKAKPRTAG) the composition is skewed to basic residues.

It belongs to the XPG/RAD2 endonuclease family. FEN1 subfamily. Interacts with PCNA. Three molecules of fen1 bind to one PCNA trimer with each molecule binding to one PCNA monomer. PCNA stimulates the nuclease activity without altering cleavage specificity. Requires Mg(2+) as cofactor. Post-translationally, phosphorylated. Phosphorylation upon DNA damage induces relocalization to the nuclear plasma.

It is found in the nucleus. Its subcellular location is the nucleolus. It localises to the nucleoplasm. The protein localises to the mitochondrion. Its function is as follows. Structure-specific nuclease with 5'-flap endonuclease and 5'-3' exonuclease activities involved in DNA replication and repair. During DNA replication, cleaves the 5'-overhanging flap structure that is generated by displacement synthesis when DNA polymerase encounters the 5'-end of a downstream Okazaki fragment. It enters the flap from the 5'-end and then tracks to cleave the flap base, leaving a nick for ligation. Also involved in the long patch base excision repair (LP-BER) pathway, by cleaving within the apurinic/apyrimidinic (AP) site-terminated flap. Acts as a genome stabilization factor that prevents flaps from equilibrating into structures that lead to duplications and deletions. Also possesses 5'-3' exonuclease activity on nicked or gapped double-stranded DNA, and exhibits RNase H activity. Also involved in replication and repair of rDNA and in repairing mitochondrial DNA. The sequence is that of Flap endonuclease 1 (fen1) from Pyrenophora tritici-repentis (strain Pt-1C-BFP) (Wheat tan spot fungus).